The chain runs to 468 residues: Glutamate--tRNA ligase (468 aa).

The 'HIGH' region motif lies at P8 to G18. The Zn(2+) site is built by C97, C99, C124, and D126. Positions K236 to R240 match the 'KMSKS' region motif. ATP is bound at residue K239.

This sequence belongs to the class-I aminoacyl-tRNA synthetase family. Glutamate--tRNA ligase type 1 subfamily. Monomer. Zn(2+) is required as a cofactor.

It localises to the cytoplasm. It carries out the reaction tRNA(Glu) + L-glutamate + ATP = L-glutamyl-tRNA(Glu) + AMP + diphosphate. Its function is as follows. Catalyzes the attachment of glutamate to tRNA(Glu) in a two-step reaction: glutamate is first activated by ATP to form Glu-AMP and then transferred to the acceptor end of tRNA(Glu). The chain is Glutamate--tRNA ligase from Francisella tularensis subsp. novicida (strain U112).